A 1175-amino-acid chain; its full sequence is DNA-directed RNA polymerase subunit beta (1175 aa).

The interval 1142–1175 is disordered; that stretch reads PMELSGSDDDEFDQAGASLGINLSRDERSDADIA. Positions 1165–1175 are enriched in basic and acidic residues; that stretch reads SRDERSDADIA.

The protein belongs to the RNA polymerase beta chain family. In terms of assembly, the RNAP catalytic core consists of 2 alpha, 1 beta, 1 beta' and 1 omega subunit. When a sigma factor is associated with the core the holoenzyme is formed, which can initiate transcription.

It catalyses the reaction RNA(n) + a ribonucleoside 5'-triphosphate = RNA(n+1) + diphosphate. DNA-dependent RNA polymerase catalyzes the transcription of DNA into RNA using the four ribonucleoside triphosphates as substrates. The protein is DNA-directed RNA polymerase subunit beta of Corynebacterium diphtheriae (strain ATCC 700971 / NCTC 13129 / Biotype gravis).